A 90-amino-acid chain; its full sequence is Actobindin-B/C (90 aa).

2 consecutive WH2 domains span residues 4 to 21 (TANP…LKHA) and 40 to 57 (DHSS…LKHV). A disordered region spans residues 57-90 (VETQDRSAPVTEGATVKSNNHSALLGEIKSKAQE).

Monomer.

Its function is as follows. Is able to bind two actin monomers at high concentrations of G-actin. Inhibits actin polymerization by sequestering G-actin and stabilizing actin dimers. This Dictyostelium discoideum (Social amoeba) protein is Actobindin-B/C (abnB).